The chain runs to 345 residues: Anthranilate phosphoribosyltransferase (345 aa).

5-phospho-alpha-D-ribose 1-diphosphate is bound by residues G80, 83 to 84, T88, 90 to 93, 108 to 116, and S120; these read GD, NIST, and KHGNRSVTS. G80 contributes to the anthranilate binding site. S92 lines the Mg(2+) pocket. N111 is a binding site for anthranilate. R166 contributes to the anthranilate binding site. D229 and E230 together coordinate Mg(2+).

Belongs to the anthranilate phosphoribosyltransferase family. Homodimer. The cofactor is Mg(2+).

It carries out the reaction N-(5-phospho-beta-D-ribosyl)anthranilate + diphosphate = 5-phospho-alpha-D-ribose 1-diphosphate + anthranilate. The protein operates within amino-acid biosynthesis; L-tryptophan biosynthesis; L-tryptophan from chorismate: step 2/5. In terms of biological role, catalyzes the transfer of the phosphoribosyl group of 5-phosphorylribose-1-pyrophosphate (PRPP) to anthranilate to yield N-(5'-phosphoribosyl)-anthranilate (PRA). The protein is Anthranilate phosphoribosyltransferase of Chlorobium phaeobacteroides (strain BS1).